The primary structure comprises 113 residues: C-C motif chemokine 15 (113 aa).

A signal peptide spans 1–21; sequence MKVSVAALSCLMLVAVLGSQA. 3 disulfide bridges follow: Cys-53-Cys-77, Cys-54-Cys-93, and Cys-64-Cys-104.

This sequence belongs to the intercrine beta (chemokine CC) family. As to quaternary structure, monomer. Post-translationally, the N-terminal is proteolytically cleaved by proteases associated with inflammatory responses. The processed forms CCL15(22-92), CCL15(25-92) and CCL15(29-92) exhibit increase in CCR1-mediated signaling and chemotaxis assays in vitro. As to expression, most abundant in heart, skeletal muscle and adrenal gland. Lower levels in placenta, liver, pancreas and bone marrow. CCL15(22-92), CCL15(25-92) and CCL15(29-92) are found in high levels in synovial fluids from rheumatoid patients.

It is found in the secreted. In terms of biological role, chemotactic factor that attracts T-cells and monocytes, but not neutrophils, eosinophils, or B-cells. Acts mainly via CC chemokine receptor CCR1. Also binds to CCR3. CCL15(22-92), CCL15(25-92) and CCL15(29-92) are more potent chemoattractants than the CCL15. The polypeptide is C-C motif chemokine 15 (CCL15) (Homo sapiens (Human)).